The chain runs to 401 residues: Nicotinate phosphoribosyltransferase (401 aa).

Residue H224 is modified to Phosphohistidine; by autocatalysis.

The protein belongs to the NAPRTase family. Transiently phosphorylated on a His residue during the reaction cycle. Phosphorylation strongly increases the affinity for substrates and increases the rate of nicotinate D-ribonucleotide production. Dephosphorylation regenerates the low-affinity form of the enzyme, leading to product release.

The catalysed reaction is nicotinate + 5-phospho-alpha-D-ribose 1-diphosphate + ATP + H2O = nicotinate beta-D-ribonucleotide + ADP + phosphate + diphosphate. It functions in the pathway cofactor biosynthesis; NAD(+) biosynthesis; nicotinate D-ribonucleotide from nicotinate: step 1/1. Its function is as follows. Catalyzes the synthesis of beta-nicotinate D-ribonucleotide from nicotinate and 5-phospho-D-ribose 1-phosphate at the expense of ATP. This Pseudomonas putida (strain ATCC 700007 / DSM 6899 / JCM 31910 / BCRC 17059 / LMG 24140 / F1) protein is Nicotinate phosphoribosyltransferase.